A 542-amino-acid polypeptide reads, in one-letter code: Nibrin homolog (542 aa).

Residues Y25 to G90 enclose the FHA domain. The BRCT domain occupies I119–M195. Residues S409–D430 are disordered. An involved in MRE11-binding region spans residues V465–V500.

Belongs to the Nibrin family. Component of the MRN complex composed of two heterodimers RAD50 and MRE11 associated with a single NBS1.

The protein localises to the nucleus. It is found in the chromosome. Functionally, component of the MRN complex, which plays a central role in double-strand break (DSB) repair, DNA recombination, maintenance of telomere integrity and meiosis. The MRN complex is involved in the repair of DNA double-strand breaks (DSBs) via homologous recombination (HR), an error-free mechanism which primarily occurs during S and G2 phases. The complex (1) mediates the end resection of damaged DNA, which generates proper single-stranded DNA, a key initial steps in HR, and is (2) required for the recruitment of other repair factors and efficient activation of ATM and ATR upon DNA damage. The MRN complex possesses single-strand endonuclease activity and double-strand-specific 3'-5' exonuclease activity, which are provided by MRE11, to initiate end resection, which is required for single-strand invasion and recombination. Within the MRN complex, NBS1 acts as a protein-protein adapter, which specifically recognizes and binds phosphorylated proteins, promoting their recruitment to DNA damage sites. Recruits MRE11 and RAD50 components of the MRN complex to DSBs in response to DNA damage. In Arabidopsis thaliana (Mouse-ear cress), this protein is Nibrin homolog.